We begin with the raw amino-acid sequence, 233 residues long: Large ribosomal subunit protein uL1 (233 aa).

It belongs to the universal ribosomal protein uL1 family. As to quaternary structure, part of the 50S ribosomal subunit.

Functionally, binds directly to 23S rRNA. The L1 stalk is quite mobile in the ribosome, and is involved in E site tRNA release. Its function is as follows. Protein L1 is also a translational repressor protein, it controls the translation of the L11 operon by binding to its mRNA. This is Large ribosomal subunit protein uL1 from Geotalea uraniireducens (strain Rf4) (Geobacter uraniireducens).